The sequence spans 61 residues: Large ribosomal subunit protein uL30 (61 aa).

Belongs to the universal ribosomal protein uL30 family. In terms of assembly, part of the 50S ribosomal subunit.

The polypeptide is Large ribosomal subunit protein uL30 (Shewanella halifaxensis (strain HAW-EB4)).